A 297-amino-acid chain; its full sequence is Large ribosomal subunit protein uL18 (297 aa).

Residues Lys-258–Thr-267 are compositionally biased toward basic residues. The disordered stretch occupies residues Lys-258–Gln-277. Over residues Glu-268–Gln-277 the composition is skewed to basic and acidic residues.

This sequence belongs to the universal ribosomal protein uL18 family. As to quaternary structure, component of the large ribosomal subunit (LSU).

It localises to the cytoplasm. It is found in the nucleus. Functionally, component of the ribosome, a large ribonucleoprotein complex responsible for the synthesis of proteins in the cell. The small ribosomal subunit (SSU) binds messenger RNAs (mRNAs) and translates the encoded message by selecting cognate aminoacyl-transfer RNA (tRNA) molecules. The large subunit (LSU) contains the ribosomal catalytic site termed the peptidyl transferase center (PTC), which catalyzes the formation of peptide bonds, thereby polymerizing the amino acids delivered by tRNAs into a polypeptide chain. The nascent polypeptides leave the ribosome through a tunnel in the LSU and interact with protein factors that function in enzymatic processing, targeting, and the membrane insertion of nascent chains at the exit of the ribosomal tunnel. In Helianthus annuus (Common sunflower), this protein is Large ribosomal subunit protein uL18 (RPL5A).